Consider the following 222-residue polypeptide: Orotate phosphoribosyltransferase (222 aa).

A 5-phospho-alpha-D-ribose 1-diphosphate-binding site is contributed by Lys-29. 37 to 38 serves as a coordination point for orotate; it reads FF. Residues 75-76, Arg-101, Lys-102, Lys-105, His-107, and 126-134 each bind 5-phospho-alpha-D-ribose 1-diphosphate; these read YK and DDVISAGTS. Orotate contacts are provided by Ser-130 and Arg-158.

This sequence belongs to the purine/pyrimidine phosphoribosyltransferase family. PyrE subfamily. In terms of assembly, homodimer. Mg(2+) is required as a cofactor.

The catalysed reaction is orotidine 5'-phosphate + diphosphate = orotate + 5-phospho-alpha-D-ribose 1-diphosphate. Its pathway is pyrimidine metabolism; UMP biosynthesis via de novo pathway; UMP from orotate: step 1/2. Catalyzes the transfer of a ribosyl phosphate group from 5-phosphoribose 1-diphosphate to orotate, leading to the formation of orotidine monophosphate (OMP). The protein is Orotate phosphoribosyltransferase of Polynucleobacter necessarius subsp. necessarius (strain STIR1).